The primary structure comprises 937 residues: MTDYKETLNLPNTTFPMKANLVQREPEIILWWEENAVYEKMLEASGAKGIFILHDGPPYANGHIHLGTALNKILKDIVIKSRNMQGYRSCYVPGWDCHGLPIELKVEQELGKKKQEMPLSLIRNRCREYAEKFLDIQREEFKRLGVFGSWDHPYQTMDPIYESVITLELARFVEKGSVIRSKKPIYWCYSCETALAEAEVEYADHTSSAIFVRFPIHDKRLHTIFPQADLTTTSIVIWTTTPWTLPSNMAIALNADFDYALLQYKNEYIIIASELVDICLKQFNWEDAKVIKVVQGKDLEGMKARHPLYDQESMIVLGDHVTLEAGTGCVHTAPGHGPEDYEVALRYNLDVYSPLDDQGRYLDTVKFFAGLRVDQANPVVIQKLEEFHRIIQKNTIQHSYPHCWRCKSPVIFRATTQWFISMEKNNLREQSLKAIKKNIEWIPSWGEDRIYNMIASRPDWCISRQRIWGVPIVALICESCGEVWNDPSWMKKIAEFFAIHPRGCDYWYEAKLEDIVPVGLKCPHCEGEQWKRESDILDVWFDSGSSFAAVLEERPNLGFPADLYLEGSDQHRGWFHSSLLISIGTRGVPPYHAVLTHGYVVDGDGRKMSKSMGNVTSPQEIISKFGVEILRLWVSSVDYREDVRISNEILQRLVDAYRRIRNTCRYLLGNINDLTLDELVPVKEMESLDQYILDVVATAYTEIQKSYISYDFHTVFHKLHNLCTTDLSAFYLDILKDRLYTSGVRSHKRKSAQTALFYILHMLLRSMAPILSFTAEEVYKYIPDTLKDDNVISVFMLPFFETSSFLLDDRVRSYWETLLLIRAEVNQAIEPMRKKGEIGHSLDTHITLYVAPELHTLLLELNTDLCSLFIVSQLDIMPLSEASVDAAVSKIDGLAVAVNRAQGNKCQRCWMYKELGSNHQYPTLCPRCTEVVENMKI.

The 'HIGH' region signature appears at 58-68 (PYANGHIHLGT). Position 566 (E566) interacts with L-isoleucyl-5'-AMP. Positions 607 to 611 (KMSKS) match the 'KMSKS' region motif. ATP is bound at residue K610. 4 residues coordinate Zn(2+): C906, C909, C925, and C928.

It belongs to the class-I aminoacyl-tRNA synthetase family. IleS type 1 subfamily. Monomer. Requires Zn(2+) as cofactor.

The protein resides in the cytoplasm. The catalysed reaction is tRNA(Ile) + L-isoleucine + ATP = L-isoleucyl-tRNA(Ile) + AMP + diphosphate. Functionally, catalyzes the attachment of isoleucine to tRNA(Ile). As IleRS can inadvertently accommodate and process structurally similar amino acids such as valine, to avoid such errors it has two additional distinct tRNA(Ile)-dependent editing activities. One activity is designated as 'pretransfer' editing and involves the hydrolysis of activated Val-AMP. The other activity is designated 'posttransfer' editing and involves deacylation of mischarged Val-tRNA(Ile). The polypeptide is Isoleucine--tRNA ligase (Lawsonia intracellularis (strain PHE/MN1-00)).